A 465-amino-acid chain; its full sequence is Pancreatic triacylglycerol lipase (465 aa).

Positions 1 to 16 (MLPLWTLSLLLGAVAG) are cleaved as a signal peptide. Disulfide bonds link C20-C26 and C107-C118. Residue S169 is the Nucleophile of the active site. N183 is a glycosylation site (N-linked (GlcNAc...) asparagine). The active-site Charge relay system is D193. E204, R207, D209, and D212 together coordinate Ca(2+). An intrachain disulfide couples C254 to C278. The Charge relay system role is filled by H280. Intrachain disulfides connect C302–C313, C316–C321, and C449–C465. Residues 355-465 (WRYKVSVTLS…EEVLLTLTPC (111 aa)) enclose the PLAT domain.

This sequence belongs to the AB hydrolase superfamily. Lipase family. As to quaternary structure, forms a 1:1 stoichiometric complex with (pro)colipase/CLPS.

Its subcellular location is the secreted. It carries out the reaction a triacylglycerol + H2O = a diacylglycerol + a fatty acid + H(+). The enzyme catalyses 1,2,3-tributanoylglycerol + H2O = dibutanoylglycerol + butanoate + H(+). It catalyses the reaction 1,2,3-tri-(9Z-octadecenoyl)-glycerol + H2O = di-(9Z)-octadecenoylglycerol + (9Z)-octadecenoate + H(+). The catalysed reaction is all-trans-retinyl hexadecanoate + H2O = all-trans-retinol + hexadecanoate + H(+). It carries out the reaction 1,2-di-(9Z-octadecenoyl)-glycerol + H2O = (9Z-octadecenoyl)-glycerol + (9Z)-octadecenoate + H(+). Inhibited by bile salts, is reactivated by (pro)colipase/CLPS. Its function is as follows. Plays an important role in fat metabolism. It preferentially splits the esters of long-chain fatty acids at positions 1 and 3, producing mainly 2-monoacylglycerol and free fatty acids, and shows considerably higher activity against insoluble emulsified substrates than against soluble ones. The sequence is that of Pancreatic triacylglycerol lipase from Homo sapiens (Human).